Consider the following 427-residue polypeptide: Large ribosomal subunit protein uL4 (427 aa).

The residue at position 2 (A2) is an N-acetylalanine. K14 is subject to N6-acetyllysine. An Omega-N-methylarginine modification is found at R97. At K106 the chain carries N6-acetyllysine. K239 participates in a covalent cross-link: Glycyl lysine isopeptide (Lys-Gly) (interchain with G-Cter in SUMO2). At K259 the chain carries N6-acetyllysine. At T266 the chain carries Phosphothreonine. 2 positions are modified to phosphoserine: S290 and S295. R300 bears the Citrulline mark. Residue K327 forms a Glycyl lysine isopeptide (Lys-Gly) (interchain with G-Cter in SUMO2) linkage. Residues K333 and K353 each carry the N6-acetyllysine modification. K364 carries the post-translational modification N6-acetyllysine; alternate. A Glycyl lysine isopeptide (Lys-Gly) (interchain with G-Cter in SUMO1); alternate cross-link involves residue K364. Position 365 is a phosphoserine (S365). The interval 369-427 (AAVAGKKPVVGKKGKKVAVGVKKQKKPLVGKKAAATKKPAPEKKSTEKKPTTEEKKPAA) is disordered. A compositionally biased stretch (basic residues) spans 377–397 (VVGKKGKKVAVGVKKQKKPLV). Positions 407–427 (PAPEKKSTEKKPTTEEKKPAA) are enriched in basic and acidic residues.

The protein belongs to the universal ribosomal protein uL4 family. Component of the large ribosomal subunit. May bind IPO9 with low affinity. Interacts with RBM3. In terms of processing, citrullinated by PADI4.

It is found in the cytoplasm. Its function is as follows. Component of the large ribosomal subunit. The ribosome is a large ribonucleoprotein complex responsible for the synthesis of proteins in the cell. The protein is Large ribosomal subunit protein uL4 (RPL4) of Macaca fascicularis (Crab-eating macaque).